A 457-amino-acid chain; its full sequence is Serine/threonine-protein phosphatase 2A regulatory subunit B'' subunit gamma (457 aa).

2 EF-hand domains span residues 276–311 (PSAL…TLTS) and 344–379 (KEPA…IQEQ). The Ca(2+) site is built by aspartate 289, aspartate 291, asparagine 293, methionine 295, and glutamate 300.

It is found in the nucleus. Its subcellular location is the cytoplasm. Functionally, possible role in the regulation of cell death. This Danio rerio (Zebrafish) protein is Serine/threonine-protein phosphatase 2A regulatory subunit B'' subunit gamma (ppp2r3c).